Consider the following 135-residue polypeptide: MDISCYGWGNPLLFGTCPATTFRCSPGIQVIVFPFLLKGHSIVGLPTAKFSDLKRKTKRGSLGVYDGQCGVQPDDRFERLFDERMGGCIFGSIKDIRQQKQDVCELLEMVYEEDSSGTEGGWADGKVWREDYKDG.

It belongs to the UPF0329 family.

This Encephalitozoon cuniculi (strain GB-M1) (Microsporidian parasite) protein is UPF0329 protein ECU07_1860/ECU10_0040/ECU11_2100.